Consider the following 195-residue polypeptide: Transmembrane protein 239 (195 aa).

The next 2 membrane-spanning stretches (helical) occupy residues 105 to 125 (LWGL…HALF) and 145 to 171 (HLLP…LLLF).

The protein localises to the membrane. This Homo sapiens (Human) protein is Transmembrane protein 239 (TMEM239).